The chain runs to 336 residues: Glucokinase (336 aa).

Residue 13–18 participates in ATP binding; sequence ADVGGT.

It belongs to the bacterial glucokinase family.

Its subcellular location is the cytoplasm. It carries out the reaction D-glucose + ATP = D-glucose 6-phosphate + ADP + H(+). This Cupriavidus metallidurans (strain ATCC 43123 / DSM 2839 / NBRC 102507 / CH34) (Ralstonia metallidurans) protein is Glucokinase.